Reading from the N-terminus, the 505-residue chain is T-cell activation GTPase-activating protein 1 (505 aa).

5 disordered regions span residues 81 to 147 (DDSL…SESS), 160 to 212 (QQDR…DPFT), 242 to 293 (QGHI…QREI), 311 to 339 (RTSS…SQLS), and 414 to 441 (KPST…HRLS). Residues 90 to 102 (SDVSTLQNDSAYD) are compositionally biased toward polar residues. Acidic residues predominate over residues 203-212 (EGDEAEDPFT). The segment covering 250–262 (SRSSPGESLGSSP) has biased composition (low complexity). Composition is skewed to basic and acidic residues over residues 283–292 (KTDKTKPQRE) and 318–336 (EKSK…RKES).

This chain is T-cell activation GTPase-activating protein 1 (Tagap1), found in Mus musculus (Mouse).